The chain runs to 1631 residues: ALK tyrosine kinase receptor (1631 aa).

The first 18 residues, 1-18 (MGSVGLLGLLLLRLSVTA), serve as a signal peptide directing secretion. Topologically, residues 19–1053 (SGSGAGTGSG…PHLPLSLVLS (1035 aa)) are extracellular. Residues 20–53 (GSGAGTGSGTGSGTGTGTGQLVGSPATGPALQPR) form a disordered region. Residues 21 to 39 (SGAGTGSGTGSGTGTGTGQ) show a composition bias toward gly residues. The heparin-binding region stretch occupies residues 60–82 (RLQRKSLAVDFVVPSLFRVYARD). Residues N185, N260, N301, N340, N427, N440, N461, N579, N587, and N643 are each glycosylated (N-linked (GlcNAc...) asparagine). An MAM 1 domain is found at 280-443 (LECSFDFPCE…DFFALKNCSE (164 aa)). Positions 494 to 652 (FYCNFENGFC…NISISLDCYL (159 aa)) constitute an MAM 2 domain. C703 and C716 are joined by a disulfide. N724 carries N-linked (GlcNAc...) asparagine glycosylation. C798 and C809 are joined by a disulfide. 4 N-linked (GlcNAc...) asparagine glycosylation sites follow: N823, N878, N879, and N901. C921 and C943 are disulfide-bonded. N1001 carries N-linked (GlcNAc...) asparagine glycosylation. 3 cysteine pairs are disulfide-bonded: C1002–C1010, C1005–C1021, and C1023–C1036. The tract at residues 1002–1040 (CSHCEGDECHMDPESHKVICFCDHGTVLAEDGVSCIVSP) is EGF-like. A helical transmembrane segment spans residues 1054 to 1074 (VVTSALVAALVLAFSGIMIVY). Over 1075–1631 (RRKHQELQAM…DALLKTPPGP (557 aa)) the chain is Cytoplasmic. Residues 1131-1407 (ITLIRGLGHG…IEYCTQDPDV (277 aa)) enclose the Protein kinase domain. Residues 1137-1145 (LGHGAFGEV) and K1165 contribute to the ATP site. The Proton acceptor role is filled by D1264. Disordered stretches follow at residues 1423-1493 (EEKV…GHVN), 1526-1554 (WFTE…REGS), and 1609-1631 (FEGT…PPGP).

In terms of assembly, homodimer; homodimerizes following heparin- and ligand-binding. Interacts with CBL, IRS1, PIK3R1 and PLCG1. Interacts with FRS2 and SHC1. Interacts with PTN and MDK. Post-translationally, phosphorylated at tyrosine residues by autocatalysis, which activates kinase activity. In cells not stimulated by a ligand, receptor protein tyrosine phosphatase beta and zeta complex (PTPRB/PTPRZ1) dephosphorylates ALK at the sites in ALK that are undergoing autophosphorylation through autoactivation.

It is found in the cell membrane. It catalyses the reaction L-tyrosyl-[protein] + ATP = O-phospho-L-tyrosyl-[protein] + ADP + H(+). Its activity is regulated as follows. Activated upon ALKAL2 ligand-binding. ALKAL2-driven activation is coupled with heparin-binding. Following ligand-binding, homodimerizes and autophosphorylates, activating its kinase activity. Inactivated through dephosphorylation by receptor protein tyrosine phosphatase beta and zeta complex (PTPRB/PTPRZ1) when there is no stimulation by a ligand. Its function is as follows. Neuronal receptor tyrosine kinase that is essentially and transiently expressed in specific regions of the central and peripheral nervous systems and plays an important role in the genesis and differentiation of the nervous system. Also acts as a key thinness protein involved in the resistance to weight gain: in hypothalamic neurons, controls energy expenditure acting as a negative regulator of white adipose tissue lipolysis and sympathetic tone to fine-tune energy homeostasis. Following activation by ALKAL2 ligand at the cell surface, transduces an extracellular signal into an intracellular response. In contrast, ALKAL1 is not a potent physiological ligand for ALK. Ligand-binding to the extracellular domain induces tyrosine kinase activation, leading to activation of the mitogen-activated protein kinase (MAPK) pathway. Phosphorylates almost exclusively at the first tyrosine of the Y-x-x-x-Y-Y motif. Induces tyrosine phosphorylation of CBL, FRS2, IRS1 and SHC1, as well as of the MAP kinases MAPK1/ERK2 and MAPK3/ERK1. ALK activation may also be regulated by pleiotrophin (PTN) and midkine (MDK). PTN-binding induces MAPK pathway activation, which is important for the anti-apoptotic signaling of PTN and regulation of cell proliferation. MDK-binding induces phosphorylation of the ALK target insulin receptor substrate (IRS1), activates mitogen-activated protein kinases (MAPKs) and PI3-kinase, resulting also in cell proliferation induction. Drives NF-kappa-B activation, probably through IRS1 and the activation of the AKT serine/threonine kinase. Recruitment of IRS1 to activated ALK and the activation of NF-kappa-B are essential for the autocrine growth and survival signaling of MDK. The protein is ALK tyrosine kinase receptor of Canis lupus familiaris (Dog).